We begin with the raw amino-acid sequence, 513 residues long: Protein CYCLOPS (513 aa).

A disordered region spans residues 327–435 (QIHGGTASGE…ERSRKMAEAK (109 aa)). A compositionally biased stretch (low complexity) spans 334–347 (SGEPSQSESSAAAP). Over residues 359–381 (PSNSSQTLCDSSWKQVGESTQNR) the composition is skewed to polar residues. A compositionally biased stretch (basic and acidic residues) spans 384-396 (GVREQIMDNLKDD). 2 consecutive short sequence motifs (nuclear localization signal) follow at residues 397–401 (RKRKR) and 421–424 (KKRR). The stretch at 447-513 (MQAVMKRCEN…ERLLSETGKI (67 aa)) forms a coiled coil.

The protein belongs to the CYCLOPS family.

It is found in the nucleus. Its function is as follows. Involved symbiotic signaling. Required for root infection by symbiotic rhizobia, infection thread (IT) formation, and nodule development. Required for symbiosome formation (i.e. the release of the bacteria from the ITs) and subsequent symbiosome development. Involved in arbuscular mycorrhizal (AM) symbiosis. The polypeptide is Protein CYCLOPS (Pisum sativum (Garden pea)).